Reading from the N-terminus, the 567-residue chain is Oxygen-dependent choline dehydrogenase (567 aa).

4–33 (DYIIIGAGSAGNVLAARLTEDADVTVLLLE) contributes to the FAD binding site. His-473 functions as the Proton acceptor in the catalytic mechanism.

This sequence belongs to the GMC oxidoreductase family. FAD is required as a cofactor.

The enzyme catalyses choline + A = betaine aldehyde + AH2. The catalysed reaction is betaine aldehyde + NAD(+) + H2O = glycine betaine + NADH + 2 H(+). It functions in the pathway amine and polyamine biosynthesis; betaine biosynthesis via choline pathway; betaine aldehyde from choline (cytochrome c reductase route): step 1/1. Involved in the biosynthesis of the osmoprotectant glycine betaine. Catalyzes the oxidation of choline to betaine aldehyde and betaine aldehyde to glycine betaine at the same rate. The sequence is that of Oxygen-dependent choline dehydrogenase from Yersinia pestis bv. Antiqua (strain Antiqua).